Here is a 336-residue protein sequence, read N- to C-terminus: 3-hydroxyisobutyrate dehydrogenase, mitochondrial (336 aa).

Residues 1-36 constitute a mitochondrion transit peptide; it reads MAASLRLLGAASGLRYWSRRLRPAAGSFAAVCSRSV. 40–69 lines the NAD(+) pocket; it reads TPVGFIGLGNMGNPMAKNLMKHGYPLIIYD. Lys60 and Lys76 each carry N6-acetyllysine; alternate. 2 positions are modified to N6-succinyllysine; alternate: Lys60 and Lys76. Lys95 carries the post-translational modification N6-succinyllysine. NAD(+) is bound by residues 103-104 and Asn108; that span reads LP. Lys121 is modified (N6-acetyllysine). Thr134 contacts NAD(+). Lys141 carries the post-translational modification N6-succinyllysine. Lys145 bears the N6-acetyllysine mark. Residue Lys149 is modified to N6-acetyllysine; alternate. Lys149 carries the N6-succinyllysine; alternate modification. Lys209 is an active-site residue. An N6-acetyllysine; alternate mark is found at Lys238 and Lys242. An N6-succinyllysine; alternate mark is found at Lys238 and Lys242. Lys284 is a binding site for NAD(+). At Lys297 the chain carries N6-succinyllysine. An N6-acetyllysine; alternate modification is found at Lys321. An N6-succinyllysine; alternate modification is found at Lys321.

The protein belongs to the HIBADH-related family. 3-hydroxyisobutyrate dehydrogenase subfamily. As to quaternary structure, homodimer.

It is found in the mitochondrion. The catalysed reaction is 3-hydroxy-2-methylpropanoate + NAD(+) = 2-methyl-3-oxopropanoate + NADH + H(+). It participates in amino-acid degradation; L-valine degradation. The polypeptide is 3-hydroxyisobutyrate dehydrogenase, mitochondrial (HIBADH) (Pongo abelii (Sumatran orangutan)).